The following is a 244-amino-acid chain: RNA transcription, translation and transport factor protein (244 aa).

Residues lysine 20, lysine 62, and lysine 98 each carry the N6-acetyllysine modification.

This sequence belongs to the RTRAF family. Homodimer. Interacts with FAM98A (via N- and C-terminus). Interacts with NIN; which may prevent phosphorylation of NIN. Interacts with POLR2A. Component of a tRNA-splicing ligase complex.

The protein localises to the nucleus. It is found in the cytoplasm. The protein resides in the cytosol. It localises to the perinuclear region. Its subcellular location is the cytoskeleton. The protein localises to the microtubule organizing center. It is found in the centrosome. Functionally, RNA-binding protein involved in modulation of mRNA transcription by Polymerase II. Component of the tRNA-splicing ligase complex and is required for tRNA ligation. May be required for RNA transport. The protein is RNA transcription, translation and transport factor protein of Mus musculus (Mouse).